Reading from the N-terminus, the 490-residue chain is Bifunctional protein HldE (490 aa).

A ribokinase region spans residues 1–328; that stretch reads MFSFDALLQA…LRRRILPHAS (328 aa). 205 to 208 lines the ATP pocket; that stretch reads NRKE. The active site involves D275. The interval 358–490 is cytidylyltransferase; that stretch reads FTNGCFDILH…LVARAREGQS (133 aa).

This sequence in the N-terminal section; belongs to the carbohydrate kinase PfkB family. In the C-terminal section; belongs to the cytidylyltransferase family. In terms of assembly, homodimer.

It carries out the reaction D-glycero-beta-D-manno-heptose 7-phosphate + ATP = D-glycero-beta-D-manno-heptose 1,7-bisphosphate + ADP + H(+). The catalysed reaction is D-glycero-beta-D-manno-heptose 1-phosphate + ATP + H(+) = ADP-D-glycero-beta-D-manno-heptose + diphosphate. It participates in nucleotide-sugar biosynthesis; ADP-L-glycero-beta-D-manno-heptose biosynthesis; ADP-L-glycero-beta-D-manno-heptose from D-glycero-beta-D-manno-heptose 7-phosphate: step 1/4. Its pathway is nucleotide-sugar biosynthesis; ADP-L-glycero-beta-D-manno-heptose biosynthesis; ADP-L-glycero-beta-D-manno-heptose from D-glycero-beta-D-manno-heptose 7-phosphate: step 3/4. Its function is as follows. Catalyzes the phosphorylation of D-glycero-D-manno-heptose 7-phosphate at the C-1 position to selectively form D-glycero-beta-D-manno-heptose-1,7-bisphosphate. In terms of biological role, catalyzes the ADP transfer from ATP to D-glycero-beta-D-manno-heptose 1-phosphate, yielding ADP-D-glycero-beta-D-manno-heptose. In Rhodopseudomonas palustris (strain TIE-1), this protein is Bifunctional protein HldE.